Here is a 164-residue protein sequence, read N- to C-terminus: MRLTSKGRYAVTAMLDVALHSQEGPVPLADISERQGISLSYLEQLFSRLRKNGLVSSVRGPGGGYLLGKDASEIVVAEVIFAVDESVDATRCQGREGCQGGDRCLTHALWRDLSDRITGFLSSISLEELVNNQEVLDVAGRQDNDKRRAPNGRAQETINVNLRP.

Residues Arg-2–Asn-131 enclose the HTH rrf2-type domain. Residues Leu-28–Lys-51 constitute a DNA-binding region (H-T-H motif). [2Fe-2S] cluster-binding residues include Cys-92, Cys-98, and Cys-104. Positions Arg-141–Pro-164 are disordered. Positions Ala-154 to Pro-164 are enriched in polar residues.

[2Fe-2S] cluster serves as cofactor.

In terms of biological role, regulates the transcription of several operons and genes involved in the biogenesis of Fe-S clusters and Fe-S-containing proteins. The chain is HTH-type transcriptional regulator IscR from Photorhabdus laumondii subsp. laumondii (strain DSM 15139 / CIP 105565 / TT01) (Photorhabdus luminescens subsp. laumondii).